We begin with the raw amino-acid sequence, 123 residues long: D-ribose pyranase (123 aa).

His20 (proton donor) is an active-site residue. Substrate is bound by residues Asp28, His90, and Tyr112–Asn114.

It belongs to the RbsD / FucU family. RbsD subfamily. In terms of assembly, homodecamer.

Its subcellular location is the cytoplasm. It carries out the reaction beta-D-ribopyranose = beta-D-ribofuranose. It participates in carbohydrate metabolism; D-ribose degradation; D-ribose 5-phosphate from beta-D-ribopyranose: step 1/2. Catalyzes the interconversion of beta-pyran and beta-furan forms of D-ribose. In Corynebacterium glutamicum (strain ATCC 13032 / DSM 20300 / JCM 1318 / BCRC 11384 / CCUG 27702 / LMG 3730 / NBRC 12168 / NCIMB 10025 / NRRL B-2784 / 534), this protein is D-ribose pyranase.